Reading from the N-terminus, the 178-residue chain is Large ribosomal subunit protein uL5 (178 aa).

At Ala2 the chain carries N-acetylalanine. Residue Lys38 forms a Glycyl lysine isopeptide (Lys-Gly) (interchain with G-Cter in SUMO2) linkage. 2 positions are modified to phosphothreonine: Thr44 and Thr47. Lys52 bears the N6-acetyllysine; alternate mark. A Glycyl lysine isopeptide (Lys-Gly) (interchain with G-Cter in SUMO2); alternate cross-link involves residue Lys52. Lys85 bears the N6-acetyllysine mark. Residue Lys154 forms a Glycyl lysine isopeptide (Lys-Gly) (interchain with G-Cter in SUMO2) linkage.

The protein belongs to the universal ribosomal protein uL5 family. In terms of assembly, component of the large ribosomal subunit (LSU). Part of the 5S RNP complex, which is a LSU subcomplex composed of the 5S RNA, RPL5 and RPL11. Component of a hexameric 5S RNP precursor complex, composed of 5S RNA, RRS1, RPF2/BXDC1, RPL5, RPL11 and HEATR3; this complex acts as a precursor for ribosome assembly. Interacts with PML. Interacts with MDM2 (via its RanBP2-type zinc finger domain); negatively regulates MDM2-mediated TP53 ubiquitination and degradation. Interacts with NOP53; retains RPL11 into the nucleolus.

It localises to the nucleus. The protein localises to the nucleolus. The protein resides in the cytoplasm. Functionally, component of the ribosome, a large ribonucleoprotein complex responsible for the synthesis of proteins in the cell. The small ribosomal subunit (SSU) binds messenger RNAs (mRNAs) and translates the encoded message by selecting cognate aminoacyl-transfer RNA (tRNA) molecules. The large subunit (LSU) contains the ribosomal catalytic site termed the peptidyl transferase center (PTC), which catalyzes the formation of peptide bonds, thereby polymerizing the amino acids delivered by tRNAs into a polypeptide chain. The nascent polypeptides leave the ribosome through a tunnel in the LSU and interact with protein factors that function in enzymatic processing, targeting, and the membrane insertion of nascent chains at the exit of the ribosomal tunnel. As part of the 5S RNP/5S ribonucleoprotein particle it is an essential component of the LSU, required for its formation and the maturation of rRNAs. It also couples ribosome biogenesis to p53/TP53 activation. As part of the 5S RNP it accumulates in the nucleoplasm and inhibits MDM2, when ribosome biogenesis is perturbed, mediating the stabilization and the activation of TP53. Promotes nucleolar location of PML. The chain is Large ribosomal subunit protein uL5 (RPL11) from Oryctolagus cuniculus (Rabbit).